The chain runs to 140 residues: Large ribosomal subunit protein uL14 (140 aa).

It belongs to the universal ribosomal protein uL14 family.

This is Large ribosomal subunit protein uL14 (RpL23-A) from Aedes aegypti (Yellowfever mosquito).